An 85-amino-acid chain; its full sequence is Small ribosomal subunit protein uS17 (85 aa).

This sequence belongs to the universal ribosomal protein uS17 family. As to quaternary structure, part of the 30S ribosomal subunit.

One of the primary rRNA binding proteins, it binds specifically to the 5'-end of 16S ribosomal RNA. The chain is Small ribosomal subunit protein uS17 from Citrifermentans bemidjiense (strain ATCC BAA-1014 / DSM 16622 / JCM 12645 / Bem) (Geobacter bemidjiensis).